The sequence spans 810 residues: Zinc finger CCCH domain-containing protein 11A (810 aa).

C3H1-type zinc fingers lie at residues 2 to 29 (PNQG…HCEA), 31 to 57 (IGNE…HMEI), and 60 to 86 (KRSE…HHNR). Ser108 carries the phosphoserine modification. Glycyl lysine isopeptide (Lys-Gly) (interchain with G-Cter in SUMO2) cross-links involve residues Lys114 and Lys124. The residue at position 132 (Ser132) is a Phosphoserine. Disordered stretches follow at residues 139 to 194 (MKVE…GLRV), 223 to 258 (KKMK…ENVR), 285 to 351 (GKRK…DKVN), and 367 to 432 (ERAS…TTCI). Lys140 is covalently cross-linked (Glycyl lysine isopeptide (Lys-Gly) (interchain with G-Cter in SUMO2)). 2 positions are modified to phosphoserine: Ser149 and Ser171. A compositionally biased stretch (acidic residues) spans 160 to 175 (ADDDEDDDDQFSEEGD). A Phosphoserine modification is found at Ser290. Composition is skewed to basic and acidic residues over residues 309-322 (KKVE…DKTP) and 367-390 (ERAS…KTDD). A Phosphothreonine modification is found at Thr321. Positions 362–423 (EEILLERASQ…KHRQQEAERQ (62 aa)) form a coiled coil. Ser370 is modified (phosphoserine). Positions 391–402 (STSGARSSSTIR) are enriched in polar residues. Residues 417 to 432 (QQEAERQKSKKDTTCI) show a composition bias toward basic and acidic residues. Lys478 participates in a covalent cross-link: Glycyl lysine isopeptide (Lys-Gly) (interchain with G-Cter in SUMO2). A disordered region spans residues 482-549 (ALRVQQSSES…KEASGETTGV (68 aa)). A compositionally biased stretch (low complexity) spans 486–498 (QQSSESSTSSPSQ). Lys619 is covalently cross-linked (Glycyl lysine isopeptide (Lys-Gly) (interchain with G-Cter in SUMO2)). The tract at residues 715–768 (TVPEAENPRDSLVLPPTQSSSDSSPPEVSGPSSSQMSMKTRRLSSASTGKPPLS) is disordered. Positions 729 to 748 (PPTQSSSDSSPPEVSGPSSS) are enriched in low complexity. Residues 749 to 762 (QMSMKTRRLSSAST) are compositionally biased toward polar residues.

In terms of assembly, interacts with TREX complex components THOC2, DDX39 and POLDIP3; the interactions are ATP-dependent. Interacts with PABPN1; this interaction retains ZC3H11A in nuclear speckles. Interacts with KPNA3.

The protein resides in the nucleus. Its subcellular location is the nucleus speckle. Through its association with TREX complex components, may participate in the export and post-transcriptional coordination of selected mRNA transcripts, including those required to maintain the metabolic processes in embryonic cells. Binds RNA. In terms of biological role, (Microbial infection) Plays a role in efficient growth of several nuclear-replicating viruses such as HIV-1, influenza virus or herpes simplex virus 1/HHV-1. Required for efficient viral mRNA export. May be required for proper polyadenylation of adenovirus type 5/HAdV-5 capsid mRNA. This Homo sapiens (Human) protein is Zinc finger CCCH domain-containing protein 11A (ZC3H11A).